The primary structure comprises 479 residues: MNTILAQQIANEGGVEAWMIAQQHKSLLRFLTCGSVDDGKSTLIGRLLHDTLQIYEDQLSSLHNDSKRHGTQGEKLDLALLVDGLQAEREQGITIDVAYRYFSTEKRKFIIADTPGHEQYTRNMATGASTCDLAILLIDARKGVLDQTRRHSFISTLLGIKHLVVAINKMDLVGYREETFARIREDYLTFAEQLPGDLDIRFVPLSALEGDNVAAQSANMRWYSGPTLLEVLETVDIQRAVDRQPMRFPVQYVNRPNLDFRGYAGTLASGSVKVGERIKVLPSGVESSVARIVTFDGDKEEACAGEAITLVLNDDIDISRGDLLLAANETLAPARHAAIDVVWMAEQPLAPGQSYDVKLAGKKTRARIEAIRYQIDINNLTQRDVESLPLNGIGLVEMTFDEPLALDIYQQNPVTGGLIFIDRLSNVTVGAGMVRELDERGATPSVEYSAFELELNALVRRHFPHWDARDLLGDKHGAA.

Residues 25–239 (KSLLRFLTCG…EVLETVDIQR (215 aa)) form the tr-type G domain. Residues 34–41 (GSVDDGKS) are G1. 34 to 41 (GSVDDGKS) contacts GTP. Residues 92–96 (GITID) form a G2 region. The G3 stretch occupies residues 113–116 (DTPG). Residues 113 to 117 (DTPGH) and 168 to 171 (NKMD) contribute to the GTP site. Positions 168–171 (NKMD) are G4. The segment at 206–208 (SAL) is G5.

This sequence belongs to the TRAFAC class translation factor GTPase superfamily. Classic translation factor GTPase family. CysN/NodQ subfamily. As to quaternary structure, heterodimer composed of CysD, the smaller subunit, and CysN.

The catalysed reaction is sulfate + ATP + H(+) = adenosine 5'-phosphosulfate + diphosphate. It functions in the pathway sulfur metabolism; hydrogen sulfide biosynthesis; sulfite from sulfate: step 1/3. In terms of biological role, with CysD forms the ATP sulfurylase (ATPS) that catalyzes the adenylation of sulfate producing adenosine 5'-phosphosulfate (APS) and diphosphate, the first enzymatic step in sulfur assimilation pathway. APS synthesis involves the formation of a high-energy phosphoric-sulfuric acid anhydride bond driven by GTP hydrolysis by CysN coupled to ATP hydrolysis by CysD. The protein is Sulfate adenylyltransferase subunit 1 of Salmonella choleraesuis (strain SC-B67).